The chain runs to 327 residues: uncharacterized protein (327 aa).

The 74-residue stretch at 32–105 (VRLDKWLAEQ…IPLDILYEDE (74 aa)) folds into the S4 RNA-binding domain. Asp156 is an active-site residue.

It belongs to the pseudouridine synthase RluA family.

It catalyses the reaction a uridine in RNA = a pseudouridine in RNA. This is an uncharacterized protein from Synechocystis sp. (strain ATCC 27184 / PCC 6803 / Kazusa).